The primary structure comprises 188 residues: Grand meiotic recombination cluster protein 2 (188 aa).

2 stretches are compositionally biased toward polar residues: residues 1-13 (MSDTTEVPRQSSE) and 21-31 (ERTNSLKSPDV). The disordered stretch occupies residues 1–31 (MSDTTEVPRQSSENDQDNNLERTNSLKSPDV).

Functionally, probable transcriptional activator involved in meiotic prophase and synaptonemal complex (SC) assembly. The protein is Grand meiotic recombination cluster protein 2 (GMC2) of Saccharomyces cerevisiae (strain ATCC 204508 / S288c) (Baker's yeast).